Here is an 85-residue protein sequence, read N- to C-terminus: Senescence-associated and QQS-related protein (85 aa).

Positions 1-24 are enriched in basic and acidic residues; it reads MSFRKVEKKPTEMGRNMTHEKSDS. 2 disordered regions span residues 1 to 35 and 55 to 85; these read MSFRKVEKKPTEMGRNMTHEKSDSDSDNEGAPMTV and SGKARSNYNLTGTAKGTGPINSFSRKHFPNY. Polar residues predominate over residues 58–77; that stretch reads ARSNYNLTGTAKGTGPINSF.

As to expression, expressed predominantly within leaves and cotyledons vasculatures. Mainly observed in fully expanded leaves, at the base of mature inflorescences, in senescing leaves and cauline leaves, and, to a lower extent, in hypocotyls and rosette leaves prior to flowering.

Functionally, plays a role in carbon allocation, including during senescence and stresses, thus impacting starch accumulation. This Arabidopsis thaliana (Mouse-ear cress) protein is Senescence-associated and QQS-related protein.